A 400-amino-acid chain; its full sequence is Casein kinase I homolog hhp2 (400 aa).

One can recognise a Protein kinase domain in the interval 12–278 (YRIGRKIGSG…YLRKLFRDLL (267 aa)). Residues 18–26 (IGSGSFGQI) and K41 contribute to the ATP site. Catalysis depends on D131, which acts as the Proton acceptor. A disordered region spans residues 330–352 (PNYSSIPLPAERNPKTPQSFSTN).

This sequence belongs to the protein kinase superfamily. CK1 Ser/Thr protein kinase family. Casein kinase I subfamily.

The protein localises to the nucleus. It catalyses the reaction L-seryl-[protein] + ATP = O-phospho-L-seryl-[protein] + ADP + H(+). It carries out the reaction L-threonyl-[protein] + ATP = O-phospho-L-threonyl-[protein] + ADP + H(+). Its function is as follows. Involved in DNA repair. May regulate the activity of protein(s) involved in double strand break repair caused by gamma rays. This Schizosaccharomyces pombe (strain 972 / ATCC 24843) (Fission yeast) protein is Casein kinase I homolog hhp2 (hhp2).